Here is a 228-residue protein sequence, read N- to C-terminus: Aquaporin Z 2 (228 aa).

2 consecutive transmembrane segments (helical) span residues 9–29 (FFGTFWLVFGGCGSAVFAAAF) and 34–54 (IGFTGVALAFGLTVLTMAYAV). The NPA 1 motif lies at 63 to 65 (NPA). 3 consecutive transmembrane segments (helical) span residues 82–102 (VPYVIAQVAGAIVAAAALYVI), 129–149 (LVSALLIEIILTAFFLIVILG), and 158–178 (GFAPIAIGLALTLIHLISIPV). The NPA 2 signature appears at 184-186 (NPA). The helical transmembrane segment at 204-224 (WLFWLAPIVGGAAGAVIWKLF) threads the bilayer.

It belongs to the MIP/aquaporin (TC 1.A.8) family. As to quaternary structure, homotetramer.

Its subcellular location is the cell inner membrane. The catalysed reaction is H2O(in) = H2O(out). Channel that permits osmotically driven movement of water in both directions. It is involved in the osmoregulation and in the maintenance of cell turgor during volume expansion in rapidly growing cells. It mediates rapid entry or exit of water in response to abrupt changes in osmolarity. The sequence is that of Aquaporin Z 2 from Agrobacterium fabrum (strain C58 / ATCC 33970) (Agrobacterium tumefaciens (strain C58)).